The following is a 480-amino-acid chain: Cytochrome P450 monooxygenase ORF11 (480 aa).

The chain crosses the membrane as a helical span at residues 9-29; that stretch reads LLLLPHLSALTPKTGFLIGLA. N-linked (GlcNAc...) asparagine glycans are attached at residues Asn265 and Asn352. Cys449 is a heme binding site.

This sequence belongs to the cytochrome P450 family. Heme serves as cofactor.

It is found in the membrane. It participates in sesquiterpene biosynthesis. Cytochrome P450 monooxygenase; part of the gene cluster that mediates the biosynthesis of PR-toxin, a bicyclic sesquiterpene belonging to the eremophilane class and acting as a mycotoxin. The first step of the pathway is catalyzed by the aristolochene synthase which performs the cyclization of trans,trans-farnesyl diphosphate (FPP) to the bicyclic sesquiterpene aristolochene. Following the formation of aristolochene, the non-oxygenated aristolochene is converted to the trioxygenated intermediate eremofortin B, via 7-epi-neopetasone. This conversion appears to involve three enzymes, a hydroxysterol oxidase-like enzyme, the quinone-oxidase prx3 that forms the quinone-type-structure in the bicyclic nucleus of aristolochene with the C8-oxo group and the C-3 hydroxyl group, and the P450 monooxygenase ORF6 that introduces the epoxide at the double bond between carbons 1 and 2. No monoxy or dioxy-intermediates have been reported to be released to the broth, so these three early oxidative reactions may be coupled together. Eremofortin B is further oxidized by another P450 monooxygenase, that introduces a second epoxide between carbons 7 and 11 prior to acetylation to eremofortin A by the acetyltransferase ORF8. The second epoxidation may be performed by a second P450 monooxygenase. After the acetylation step, eremofortin A is converted to eremofortin C and then to PR-toxin. First the conversion of eremofortin A to eremofortin C proceeds by oxidation of the side chain of the molecule at C-12 and is catalyzed by the short-chain oxidoreductase prx1. The cytochrome P450 monooxygenase ORF6 is probably also involved in this step. The primary alcohol formed at C-12 is finally oxidized by the short-chain alcohol dehydrogenase prx4 that forms PR-toxin. This is Cytochrome P450 monooxygenase ORF11 from Penicillium roqueforti (strain FM164).